Reading from the N-terminus, the 205-residue chain is LIM domain-containing protein PLIM2b (205 aa).

LIM zinc-binding domains lie at 8–68 and 102–162; these read DKCN…LFKE and DKCA…LFME. Residues 177-205 form a disordered region; the sequence is RTASGNTLPPEPTEDVAVEAKEENGVSES. The segment covering 194–205 has biased composition (basic and acidic residues); sequence VEAKEENGVSES.

In terms of assembly, interacts with F-actin. As to expression, predominantly expressed in flowers and in pollen grains. Detected in vasculature and roots.

It is found in the cytoplasm. It localises to the cytoskeleton. In terms of biological role, binds to actin filaments and promotes cross-linking into thick bundles. Has an actin-stabilizing activity. The actin regulatory activities are inhibited by pH &gt; 6.8 but are [Ca(2+)] independent. This is LIM domain-containing protein PLIM2b from Arabidopsis thaliana (Mouse-ear cress).